Reading from the N-terminus, the 409-residue chain is Accessory Sec system protein translocase subunit SecY2 (409 aa).

Transmembrane regions (helical) follow at residues 16-36 (ILIT…PIPG), 61-81 (LSQV…MILL), 104-124 (VVML…FQYH), 132-152 (LLLA…IGNL), 161-181 (MTIL…PLIF), 190-210 (LAII…ITFE), 242-262 (GMAF…IILL), 286-306 (GVVI…FVNI), 341-361 (LFGT…LLFA), and 374-394 (TGIF…FQVI).

The protein belongs to the SecY/SEC61-alpha family. SecY2 subfamily. As to quaternary structure, component of the accessory SecA2/SecY2 protein translocase complex required to export cell wall proteins. May form heterotrimers with SecE and SecG subunits.

It localises to the cell membrane. Functionally, part of the accessory SecA2/SecY2 system specifically required for export of possible cell wall proteins. The central subunit of a protein translocation channel. In Streptococcus agalactiae serotype Ia (strain ATCC 27591 / A909 / CDC SS700), this protein is Accessory Sec system protein translocase subunit SecY2.